Consider the following 189-residue polypeptide: Glycerol-3-phosphate acyltransferase (189 aa).

Helical transmembrane passes span 1-21, 79-99, 113-133, and 151-171; these read MVWL…AILL, QQAW…YFNF, LGLY…VFAF, and LLAW…GVIV.

This sequence belongs to the PlsY family. As to quaternary structure, probably interacts with PlsX.

It localises to the cell inner membrane. It catalyses the reaction an acyl phosphate + sn-glycerol 3-phosphate = a 1-acyl-sn-glycero-3-phosphate + phosphate. It functions in the pathway lipid metabolism; phospholipid metabolism. In terms of biological role, catalyzes the transfer of an acyl group from acyl-phosphate (acyl-PO(4)) to glycerol-3-phosphate (G3P) to form lysophosphatidic acid (LPA). This enzyme utilizes acyl-phosphate as fatty acyl donor, but not acyl-CoA or acyl-ACP. The chain is Glycerol-3-phosphate acyltransferase from Azotobacter vinelandii (strain DJ / ATCC BAA-1303).